We begin with the raw amino-acid sequence, 323 residues long: Beta-ketoacyl-[acyl-carrier-protein] synthase III (323 aa).

Active-site residues include C114 and H250. Residues 251 to 255 (QANIR) are ACP-binding. Residue N280 is part of the active site.

This sequence belongs to the thiolase-like superfamily. FabH family. Homodimer.

The protein resides in the cytoplasm. It carries out the reaction malonyl-[ACP] + acetyl-CoA + H(+) = 3-oxobutanoyl-[ACP] + CO2 + CoA. It participates in lipid metabolism; fatty acid biosynthesis. Catalyzes the condensation reaction of fatty acid synthesis by the addition to an acyl acceptor of two carbons from malonyl-ACP. Catalyzes the first condensation reaction which initiates fatty acid synthesis and may therefore play a role in governing the total rate of fatty acid production. Possesses both acetoacetyl-ACP synthase and acetyl transacylase activities. Its substrate specificity determines the biosynthesis of branched-chain and/or straight-chain of fatty acids. The chain is Beta-ketoacyl-[acyl-carrier-protein] synthase III from Alkalilimnicola ehrlichii (strain ATCC BAA-1101 / DSM 17681 / MLHE-1).